A 1723-amino-acid polypeptide reads, in one-letter code: Lys-gingipain (1723 aa).

A signal peptide spans 1 to 24 (MRKLLLLIAASLLGVGLYAQSAKI). Positions 25–228 (KLDAPTTRTT…ETAYKQLFNR (204 aa)) are excised as a propeptide. Ca(2+)-binding residues include Asp-313, Asp-337, Asp-339, Phe-341, and Glu-343. The active-site Proton donor is the His-444. Cys-477 functions as the Nucleophile in the catalytic mechanism. The Ca(2+) site is built by Phe-482 and Glu-491. Residues 964–985 (WDAPNGTPNPNPNPNPGTTTLS) are disordered. Residues Ser-987, Glu-989, Asp-1000, Asp-1002, Asp-1004, His-1006, Ser-1021, Gly-1023, Asn-1042, Asp-1145, Glu-1146, Asp-1430, Glu-1432, Asp-1444, Asp-1446, Asp-1448, Asn-1450, Ser-1480, Asn-1495, and Asp-1585 each contribute to the Ca(2+) site.

Belongs to the peptidase C25 family. In terms of processing, proteolytically cleaved into a catalytic subunit and three adhesins. Arg-gingipain is involved in this post-translational processing.

It localises to the secreted. It catalyses the reaction Endopeptidase with strict specificity for lysyl bonds.. Its activity is regulated as follows. Activated by the thiol-reducing agents cysteine, 2-mercaptoethanol and dithiothreitol. Inhibited by iodacetamide, iodoacetic acid, leupeptin, tosyl-L-lysine and tosyl-L-phenylalanine. Not inhibited by elastatinal, chymostatin, cystatins, alpha1-antichymotrypsin or the serine protease inhibitors phenylmethylsulfonyl fluoride and diisopropylfluorophosphate. Not inhibited by metal ion chelators. Inhibited by the heavy metal ions Fe(3+), Zn(2+), Cu(2+) and Mn(2+). In terms of biological role, cysteine proteinase with a strong preference for substrates with Lys in the P1 position. Hydrolyzes bovine hemoglobin, bovine serum albumin, casein, human placental type I collagen and human IgA and IgG. Disrupts the functions of polymorphonuclear leukocytes. May act as a virulence factor in the development of peridontal disease. Involved in the coaggregation of P.gingivalis with other oral bacteria. This is Lys-gingipain from Porphyromonas gingivalis (strain ATCC 33277 / DSM 20709 / CIP 103683 / JCM 12257 / NCTC 11834 / 2561).